Consider the following 1211-residue polypeptide: PH domain-containing protein DDB_G0287875 (1211 aa).

The Ras-associating 1 domain occupies 5 to 90 (QKKILKVFDQ…YKFFFLNPNG (86 aa)). Residues 103–112 (KSQSASTSGS) show a composition bias toward polar residues. The disordered stretch occupies residues 103–133 (KSQSASTSGSAPPKKEPPKPQELQQKQHISK). A PH domain is found at 132 to 223 (SKGKSGWLLR…WAQELQATMN (92 aa)). Calponin-homology (CH) domains are found at residues 277-384 (TTLV…VGYF) and 392-502 (FNMR…LSGQ). Disordered regions lie at residues 520–941 (VEPE…TESV) and 973–1110 (TSAT…PKNT). Positions 527-572 (SIRDKQLKLMREKKEEEDRLKKEKEEKEKEEKEKLEKESSAAAAAT) form a coiled coil. A compositionally biased stretch (basic and acidic residues) spans 528–565 (IRDKQLKLMREKKEEEDRLKKEKEEKEKEEKEKLEKES). 4 stretches are compositionally biased toward low complexity: residues 566–596 (SAAAAATSSIASTANSNSTEPPKPTTVPLKK), 607–646 (PPTVSSPTTTTTTTVPTTVPTTVTTTTTTTSPTTSPTLTP), 655–668 (KKPATAPLKLKPVA), and 676–691 (PSSSTSTTTTPTTTPS). Residues 703–729 (QLEKEKQDRLEKARLEKEKAEKEEQEF) are compositionally biased toward basic and acidic residues. The stretch at 703–847 (QLEKEKQDRL…ERKHDENDMD (145 aa)) forms a coiled coil. The segment covering 744 to 753 (LLEQQKQQQE) has biased composition (low complexity). 2 stretches are compositionally biased toward basic and acidic residues: residues 754-778 (GQERLRKEEEEQQQQRELEEKQRQI) and 786-853 (EARI…KLLE). The segment covering 862-877 (PTITPPQSLHSSQIIR) has biased composition (polar residues). The stretch at 880–909 (IEEDDQTNSELEMFQNEYNRLQDEEEHINS) forms a coiled coil. Low complexity-rich tracts occupy residues 914–936 (GSSGSNNSNNNNNNNNNKSGASS) and 976–1010 (TTSDSFNLSTSSTSLSFLPSSPDLSTNSTFTTNNN). Positions 1032–1048 (TKEQQSIIDKQTGLVSK) are enriched in polar residues. Residues 1048–1076 (KQSTNNESNEQQQQQQQQQQLQQQQSSQN) adopt a coiled-coil conformation. Over residues 1049-1083 (QSTNNESNEQQQQQQQQQQLQQQQSSQNSTTSIST) the composition is skewed to low complexity. The span at 1093 to 1104 (NEEKEKESEPHK) shows a compositional bias: basic and acidic residues. Residues 1112–1196 (GRVVVRICLE…DRFVFKKNDI (85 aa)) enclose the Ras-associating 2 domain.

The protein is PH domain-containing protein DDB_G0287875 of Dictyostelium discoideum (Social amoeba).